The following is a 453-amino-acid chain: Ribosomal protein uS12 methylthiotransferase RimO (453 aa).

An MTTase N-terminal domain is found at 6 to 116; the sequence is PKVGFVSLGC…VMEAVHEALP (111 aa). Cys15, Cys51, Cys80, Cys147, Cys151, and Cys154 together coordinate [4Fe-4S] cluster. In terms of domain architecture, Radical SAM core spans 133–370; the sequence is LTPRHYAYLK…MEKQAQISAA (238 aa). Residues 373 to 441 form the TRAM domain; sequence EAKIGTVQQC…DHDLYGDALP (69 aa).

It belongs to the methylthiotransferase family. RimO subfamily. It depends on [4Fe-4S] cluster as a cofactor.

The protein localises to the cytoplasm. The enzyme catalyses L-aspartate(89)-[ribosomal protein uS12]-hydrogen + (sulfur carrier)-SH + AH2 + 2 S-adenosyl-L-methionine = 3-methylsulfanyl-L-aspartate(89)-[ribosomal protein uS12]-hydrogen + (sulfur carrier)-H + 5'-deoxyadenosine + L-methionine + A + S-adenosyl-L-homocysteine + 2 H(+). Its function is as follows. Catalyzes the methylthiolation of an aspartic acid residue of ribosomal protein uS12. The chain is Ribosomal protein uS12 methylthiotransferase RimO from Stenotrophomonas maltophilia (strain R551-3).